The sequence spans 649 residues: Cysteine-rich receptor-like protein kinase 2 (649 aa).

An N-terminal signal peptide occupies residues 1–29 (MKKEPVHILPLYLPCLLMFLLSSLRQITG). The Extracellular segment spans residues 30–258 (DARARAVKVT…IPRNGRSRGS (229 aa)). Gnk2-homologous domains are found at residues 33-134 (ARAV…NYSF) and 139-245 (KGPE…DQDF). Residues Asn-47, Asn-131, Asn-149, Asn-154, and Asn-214 are each glycosylated (N-linked (GlcNAc...) asparagine). The helical transmembrane segment at 259-279 (VVVIVVSVLSSVVVFMIGVAV) threads the bilayer. At 280-649 (SVYICKRRTI…TVSQSSFYGR (370 aa)) the chain is on the cytoplasmic side. Positions 325–608 (FDNANKLGQG…HMLKNKEEVL (284 aa)) constitute a Protein kinase domain. Residues 331 to 339 (LGQGGFGTV) and Lys-353 each bind ATP. Tyr-398 carries the post-translational modification Phosphotyrosine. Asp-450 (proton acceptor) is an active-site residue. Phosphoserine is present on residues Ser-454 and Ser-483. Phosphothreonine occurs at positions 484 and 489. Residue Tyr-497 is modified to Phosphotyrosine.

Belongs to the protein kinase superfamily. Ser/Thr protein kinase family. CRK subfamily.

The protein localises to the membrane. The catalysed reaction is L-seryl-[protein] + ATP = O-phospho-L-seryl-[protein] + ADP + H(+). The enzyme catalyses L-threonyl-[protein] + ATP = O-phospho-L-threonyl-[protein] + ADP + H(+). This Arabidopsis thaliana (Mouse-ear cress) protein is Cysteine-rich receptor-like protein kinase 2 (CRK2).